The sequence spans 321 residues: D-alanine--D-alanine ligase (321 aa).

The ATP-grasp domain maps to 121–315; sequence RSWFLTNNIN…FVNLIEEILK (195 aa). 148 to 199 contacts ATP; that stretch reads IKRPYVIKPFTQGSSIGVEVIFEEDDFNFANYDFPYGDEVIIEKYIKGRELQ. Residues glutamate 268, glutamate 282, and asparagine 284 each coordinate Mg(2+).

Belongs to the D-alanine--D-alanine ligase family. Mg(2+) is required as a cofactor. It depends on Mn(2+) as a cofactor.

The protein localises to the cytoplasm. The enzyme catalyses 2 D-alanine + ATP = D-alanyl-D-alanine + ADP + phosphate + H(+). Its pathway is cell wall biogenesis; peptidoglycan biosynthesis. Its function is as follows. Cell wall formation. The chain is D-alanine--D-alanine ligase from Rickettsia bellii (strain OSU 85-389).